Reading from the N-terminus, the 118-residue chain is Large ribosomal subunit protein bL19 (118 aa).

The protein belongs to the bacterial ribosomal protein bL19 family.

Functionally, this protein is located at the 30S-50S ribosomal subunit interface and may play a role in the structure and function of the aminoacyl-tRNA binding site. In Geotalea uraniireducens (strain Rf4) (Geobacter uraniireducens), this protein is Large ribosomal subunit protein bL19.